Consider the following 166-residue polypeptide: Small ribosomal subunit protein cS23z (166 aa).

The protein belongs to the chloroplast-specific ribosomal protein cS23 family. In terms of assembly, part of the 30S ribosomal subunit.

The protein resides in the plastid. Its subcellular location is the chloroplast. In terms of biological role, component of the chloroplast ribosome (chloro-ribosome), a dedicated translation machinery responsible for the synthesis of chloroplast genome-encoded proteins, including proteins of the transcription and translation machinery and components of the photosynthetic apparatus. The sequence is that of Small ribosomal subunit protein cS23z from Arabidopsis thaliana (Mouse-ear cress).